The chain runs to 336 residues: Uroporphyrinogen decarboxylase (336 aa).

Substrate is bound by residues 24–28 (RQVGR), aspartate 73, tyrosine 142, serine 197, and histidine 312.

It belongs to the uroporphyrinogen decarboxylase family. As to quaternary structure, homodimer.

It is found in the cytoplasm. It carries out the reaction uroporphyrinogen III + 4 H(+) = coproporphyrinogen III + 4 CO2. The protein operates within porphyrin-containing compound metabolism; protoporphyrin-IX biosynthesis; coproporphyrinogen-III from 5-aminolevulinate: step 4/4. Functionally, catalyzes the decarboxylation of four acetate groups of uroporphyrinogen-III to yield coproporphyrinogen-III. This Chlamydia trachomatis serovar L2 (strain ATCC VR-902B / DSM 19102 / 434/Bu) protein is Uroporphyrinogen decarboxylase.